The primary structure comprises 214 residues: Pyridoxine/pyridoxamine 5'-phosphate oxidase (214 aa).

Residues 9–12 and K67 contribute to the substrate site; that span reads RLDY. FMN is bound by residues 62–67, 77–78, K84, and Q106; these read RMVLLK and FT. Residues Y124, R128, and S132 each contribute to the substrate site. FMN is bound by residues 141 to 142 and W186; that span reads QS. A substrate-binding site is contributed by 192–194; that stretch reads RLH. R196 contributes to the FMN binding site.

The protein belongs to the pyridoxamine 5'-phosphate oxidase family. Homodimer. It depends on FMN as a cofactor.

It carries out the reaction pyridoxamine 5'-phosphate + O2 + H2O = pyridoxal 5'-phosphate + H2O2 + NH4(+). It catalyses the reaction pyridoxine 5'-phosphate + O2 = pyridoxal 5'-phosphate + H2O2. The protein operates within cofactor metabolism; pyridoxal 5'-phosphate salvage; pyridoxal 5'-phosphate from pyridoxamine 5'-phosphate: step 1/1. It participates in cofactor metabolism; pyridoxal 5'-phosphate salvage; pyridoxal 5'-phosphate from pyridoxine 5'-phosphate: step 1/1. In terms of biological role, catalyzes the oxidation of either pyridoxine 5'-phosphate (PNP) or pyridoxamine 5'-phosphate (PMP) into pyridoxal 5'-phosphate (PLP). In Microcystis aeruginosa (strain NIES-843 / IAM M-2473), this protein is Pyridoxine/pyridoxamine 5'-phosphate oxidase.